The sequence spans 129 residues: Small ribosomal subunit protein uS11 (129 aa).

Belongs to the universal ribosomal protein uS11 family. As to quaternary structure, part of the 30S ribosomal subunit. Interacts with proteins S7 and S18. Binds to IF-3.

In terms of biological role, located on the platform of the 30S subunit, it bridges several disparate RNA helices of the 16S rRNA. Forms part of the Shine-Dalgarno cleft in the 70S ribosome. This is Small ribosomal subunit protein uS11 from Carboxydothermus hydrogenoformans (strain ATCC BAA-161 / DSM 6008 / Z-2901).